An 891-amino-acid polypeptide reads, in one-letter code: Bifunctional aldehyde-alcohol dehydrogenase AdhE (891 aa).

The aldehyde dehydrogenase stretch occupies residues 2–440 (AVTNVAELNA…ENVGPKHLIN (439 aa)). Residues 110–115 (IVPTTN), Gly-195, and Gly-213 each bind NAD(+). The Nucleophile role is filled by Cys-246. The NAD(+) site is built by Glu-335 and Leu-419. Residues 441-448 (KKTVAKRA) are linker. Positions 449-891 (ENMLWHKLPK…KAEKKAKKSA (443 aa)) are alcohol dehydrogenase. Residues Asp-487, Asp-519, 546-550 (GSPMD), 597-598 (TT), Val-610, Lys-619, and Leu-638 each bind NAD(+). 4 residues coordinate Fe cation: Asp-653, His-657, His-723, and His-737.

It in the N-terminal section; belongs to the aldehyde dehydrogenase family. This sequence in the C-terminal section; belongs to the iron-containing alcohol dehydrogenase family. Forms long filaments, called spirosomes. Requires Fe(2+) as cofactor.

It carries out the reaction acetaldehyde + NAD(+) + CoA = acetyl-CoA + NADH + H(+). It catalyses the reaction ethanol + NAD(+) = acetaldehyde + NADH + H(+). The enzyme catalyses a primary alcohol + NAD(+) = an aldehyde + NADH + H(+). Under fermentative conditions, catalyzes the sequential NADH-dependent reduction of acetyl-CoA to acetaldehyde and then to ethanol. Plays an important role in virulence and is critical for proper regulation of virulence gene expression. The polypeptide is Bifunctional aldehyde-alcohol dehydrogenase AdhE (Escherichia coli O157:H7).